Consider the following 459-residue polypeptide: MFIAMADFKLLLLILILLSLFELDLLHFHHDFFSPFPVKIGLLLISIFFYAYSTTRSKPVYLVDFSCHQPTDSCKISSETFFNMAKGAQLYTEETIQFMTRILNRSGLGDDTYSPRCMLTSPPTPSMYEARHESELVIFGALNSLFKKTGIEPREVGIFIVNCSLFNPNPSLSSMIVNRYKLKTDVKTYNLSGISVDLATNLLKANPNTYAVIVSTENMTLSMYRGNDRSMLVPNCLFRVGGAAVMLSNRSQDRVRSKYELTHIVRTHKGSSDKHYTCAEQKEDSKGIVGVALSKELTVVAGDTLKTNLTALGPLVLPLSEKLRFILFLVKSKLFRLKVSPYVPDFKLCFKHFCIHAGGRALLDAVEKGLGLSEFDLEPSRMTLHRFGNTSSSSLWYELAYVEAKCRVKRGDRVWQLAFGSGFKCNSIVWRALRTIPANESLVGNPWGDSVHKYPVHVT.

An N-terminal signal peptide occupies residues methionine 1–leucine 25. A helical transmembrane segment spans residues phenylalanine 32–tyrosine 52. In terms of domain architecture, FAE spans tyrosine 52–leucine 334. Catalysis depends on residues histidine 268, histidine 352, histidine 356, histidine 385, and asparagine 389.

It belongs to the thiolase-like superfamily. Chalcone/stilbene synthases family. As to expression, expressed in siliques.

It is found in the membrane. The enzyme catalyses a very-long-chain acyl-CoA + malonyl-CoA + H(+) = a very-long-chain 3-oxoacyl-CoA + CO2 + CoA. Its pathway is lipid metabolism; fatty acid biosynthesis. The protein is Probable 3-ketoacyl-CoA synthase 14 of Arabidopsis thaliana (Mouse-ear cress).